Reading from the N-terminus, the 288-residue chain is ATP synthase gamma chain (288 aa).

It belongs to the ATPase gamma chain family. F-type ATPases have 2 components, CF(1) - the catalytic core - and CF(0) - the membrane proton channel. CF(1) has five subunits: alpha(3), beta(3), gamma(1), delta(1), epsilon(1). CF(0) has three main subunits: a, b and c.

It localises to the cell inner membrane. In terms of biological role, produces ATP from ADP in the presence of a proton gradient across the membrane. The gamma chain is believed to be important in regulating ATPase activity and the flow of protons through the CF(0) complex. The polypeptide is ATP synthase gamma chain (Acidithiobacillus ferrooxidans (strain ATCC 23270 / DSM 14882 / CIP 104768 / NCIMB 8455) (Ferrobacillus ferrooxidans (strain ATCC 23270))).